The sequence spans 251 residues: Putative F-box protein L166 (251 aa).

The region spanning 1 to 46 (MDNICELFDEILPLIIEYLSDHDKVKFMTTCSRLYYFIDKVYYENI) is the F-box domain. The interval 188-251 (PEPESQENFR…RPKSFMKYRR (64 aa)) is disordered. Positions 202 to 217 (TESNNNKPVNKSQPQI) are enriched in polar residues. Over residues 241 to 251 (KRPKSFMKYRR) the composition is skewed to basic residues.

This Acanthamoeba polyphaga (Amoeba) protein is Putative F-box protein L166.